Here is a 247-residue protein sequence, read N- to C-terminus: Eukaryotic translation initiation factor 6 (247 aa).

Residues serine 174 and serine 175 each carry the phosphoserine; by CK1 modification.

The protein belongs to the eIF-6 family. Monomer. Associates with the 60S ribosomal subunit. In terms of processing, phosphorylation at Ser-174 and Ser-175 promotes nuclear export.

The protein localises to the cytoplasm. Its subcellular location is the nucleus. The protein resides in the nucleolus. Binds to the 60S ribosomal subunit and prevents its association with the 40S ribosomal subunit to form the 80S initiation complex in the cytoplasm. Is also involved in ribosome biogenesis. Associates with pre-60S subunits in the nucleus and is involved in its nuclear export. The protein is Eukaryotic translation initiation factor 6 (tif6) of Emericella nidulans (strain FGSC A4 / ATCC 38163 / CBS 112.46 / NRRL 194 / M139) (Aspergillus nidulans).